The chain runs to 179 residues: Chymotrypsin inhibitor ECI (179 aa).

Gln-1 carries the pyrrolidone carboxylic acid modification. Cystine bridges form between Cys-40-Cys-84 and Cys-134-Cys-143.

The protein belongs to the protease inhibitor I3 (leguminous Kunitz-type inhibitor) family.

Functionally, inhibition of chymotrypsin. The polypeptide is Chymotrypsin inhibitor ECI (Erythrina variegata (Indian coral tree)).